The sequence spans 295 residues: UTP--glucose-1-phosphate uridylyltransferase (295 aa).

The protein belongs to the UDPGP type 2 family.

The catalysed reaction is alpha-D-glucose 1-phosphate + UTP + H(+) = UDP-alpha-D-glucose + diphosphate. Its function is as follows. May play a role in stationary phase survival. The chain is UTP--glucose-1-phosphate uridylyltransferase (galU) from Haemophilus ducreyi (strain 35000HP / ATCC 700724).